Consider the following 305-residue polypeptide: Probable branched-chain-amino-acid aminotransferase (305 aa).

N6-(pyridoxal phosphate)lysine is present on lysine 156.

The protein belongs to the class-IV pyridoxal-phosphate-dependent aminotransferase family. Pyridoxal 5'-phosphate is required as a cofactor.

It catalyses the reaction L-leucine + 2-oxoglutarate = 4-methyl-2-oxopentanoate + L-glutamate. It carries out the reaction L-isoleucine + 2-oxoglutarate = (S)-3-methyl-2-oxopentanoate + L-glutamate. The catalysed reaction is L-valine + 2-oxoglutarate = 3-methyl-2-oxobutanoate + L-glutamate. It functions in the pathway amino-acid biosynthesis; L-isoleucine biosynthesis; L-isoleucine from 2-oxobutanoate: step 4/4. Its pathway is amino-acid biosynthesis; L-leucine biosynthesis; L-leucine from 3-methyl-2-oxobutanoate: step 4/4. The protein operates within amino-acid biosynthesis; L-valine biosynthesis; L-valine from pyruvate: step 4/4. Acts on leucine, isoleucine and valine. This Synechocystis sp. (strain ATCC 27184 / PCC 6803 / Kazusa) protein is Probable branched-chain-amino-acid aminotransferase (ilvE).